A 567-amino-acid chain; its full sequence is Berberine bridge enzyme-like D-1 (567 aa).

The N-terminal stretch at 1–33 is a signal peptide; that stretch reads MKRNISMFLQLLLIILMMISFLFTSLLVPSVSA. A disulfide bridge connects residues cysteine 42 and cysteine 103. N-linked (GlcNAc...) asparagine glycosylation is present at asparagine 50. One can recognise an FAD-binding PCMH-type domain in the interval 81-257; sequence SKPKPTVIIV…YAWKIRLLKV (177 aa). Histidine 118 is modified (pros-8alpha-FAD histidine). N-linked (GlcNAc...) asparagine glycans are attached at residues asparagine 364 and asparagine 378.

It belongs to the oxygen-dependent FAD-linked oxidoreductase family. FAD is required as a cofactor. Mostly expressed in roots at low levels.

The protein localises to the vacuole. It participates in alkaloid biosynthesis; nicotine biosynthesis. Its function is as follows. Involved in the biosynthesis of pyridine alkaloid natural products, leading mainly to the production of anabasine, anatabine, nicotine and nornicotine, effective deterrents against herbivores with antiparasitic and pesticide properties (neurotoxins); nornicotine serves as the precursor in the synthesis of the carcinogen compound N'-nitrosonornicotine (NNN). Catalyzes a late oxidation step subsequent to the pyridine ring condensation reaction in the biosynthesis of alkaloids. This is Berberine bridge enzyme-like D-1 from Nicotiana tabacum (Common tobacco).